A 291-amino-acid polypeptide reads, in one-letter code: Malectin (291 aa).

The signal sequence occupies residues 1–30 (MLRPRGAEGTAVALLRLLLLLLLLGPKLRG). Residues 31–268 (PGLGVVGAAG…TPNPYASDNS (238 aa)) are Lumenal-facing. Positions 81, 103, 130, 131, and 200 each coordinate a carbohydrate. The tract at residues 220-264 (LQPHPGLEKKEEEEEEEEYDEGSNLKRQTNKNRVQSGPRTPNPYA) is disordered. The span at 230–240 (EEEEEEEEYDE) shows a compositional bias: acidic residues. A compositionally biased stretch (polar residues) spans 244-264 (LKRQTNKNRVQSGPRTPNPYA). Asn-267 carries N-linked (GlcNAc...) asparagine glycosylation. A helical transmembrane segment spans residues 269-289 (SLMFPILVAFGVFIPTLFCLC). Residues 290 to 291 (RL) are Cytoplasmic-facing.

This sequence belongs to the malectin family. In terms of assembly, interacts with the oligosaccharyltransferase (OST) complex.

It localises to the endoplasmic reticulum membrane. Functionally, carbohydrate-binding protein with a strong ligand preference for Glc2-N-glycan. May play a role in the early steps of protein N-glycosylation. The protein is Malectin of Mus musculus (Mouse).